A 206-amino-acid polypeptide reads, in one-letter code: Large ribosomal subunit protein uL4 (206 aa).

Residues 46–89 are disordered; sequence GNRAQKTRAEVKHSTKKPWRQKGTGRARSGMTSSPLWRKGGRAF. Basic residues predominate over residues 59 to 70; that stretch reads STKKPWRQKGTG.

Belongs to the universal ribosomal protein uL4 family. In terms of assembly, part of the 50S ribosomal subunit.

One of the primary rRNA binding proteins, this protein initially binds near the 5'-end of the 23S rRNA. It is important during the early stages of 50S assembly. It makes multiple contacts with different domains of the 23S rRNA in the assembled 50S subunit and ribosome. In terms of biological role, forms part of the polypeptide exit tunnel. The chain is Large ribosomal subunit protein uL4 from Neisseria gonorrhoeae (strain NCCP11945).